Consider the following 438-residue polypeptide: Enolase (438 aa).

Gln-174 lines the (2R)-2-phosphoglycerate pocket. The active-site Proton donor is the Glu-216. Residues Asp-253, Glu-297, and Asp-324 each contribute to the Mg(2+) site. (2R)-2-phosphoglycerate is bound by residues Lys-349, Arg-378, Ser-379, and Lys-400. Catalysis depends on Lys-349, which acts as the Proton acceptor.

This sequence belongs to the enolase family. In terms of assembly, component of the RNA degradosome, a multiprotein complex involved in RNA processing and mRNA degradation. The cofactor is Mg(2+).

The protein resides in the cytoplasm. The protein localises to the secreted. Its subcellular location is the cell surface. It carries out the reaction (2R)-2-phosphoglycerate = phosphoenolpyruvate + H2O. Its pathway is carbohydrate degradation; glycolysis; pyruvate from D-glyceraldehyde 3-phosphate: step 4/5. Functionally, catalyzes the reversible conversion of 2-phosphoglycerate (2-PG) into phosphoenolpyruvate (PEP). It is essential for the degradation of carbohydrates via glycolysis. The chain is Enolase from Psychrobacter cryohalolentis (strain ATCC BAA-1226 / DSM 17306 / VKM B-2378 / K5).